Here is a 464-residue protein sequence, read N- to C-terminus: Chromosomal replication initiator protein DnaA (464 aa).

Residues 1 to 82 form a domain I, interacts with DnaA modulators region; it reads MKNAAELWHN…GSRLDIQFIE (82 aa). The domain II stretch occupies residues 82-125; that stretch reads EEGQAKHMLDRQNEEVEVMEVAPAKTKAQKTPKSSDELVMSELG. Residues 126–342 are domain III, AAA+ region; sequence QLNEKYTFDT…GALTRVIAYA (217 aa). 4 residues coordinate ATP: glycine 170, glycine 172, lysine 173, and threonine 174. A domain IV, binds dsDNA region spans residues 343-464; that stretch reads NLVGRTIDPN…EQIKHELKHS (122 aa).

This sequence belongs to the DnaA family. Oligomerizes as a right-handed, spiral filament on DNA at oriC.

Its subcellular location is the cytoplasm. Plays an essential role in the initiation and regulation of chromosomal replication. ATP-DnaA binds to the origin of replication (oriC) to initiate formation of the DNA replication initiation complex once per cell cycle. Binds the DnaA box (a 9 base pair repeat at the origin) and separates the double-stranded (ds)DNA. Forms a right-handed helical filament on oriC DNA; dsDNA binds to the exterior of the filament while single-stranded (ss)DNA is stabiized in the filament's interior. The ATP-DnaA-oriC complex binds and stabilizes one strand of the AT-rich DNA unwinding element (DUE), permitting loading of DNA polymerase. After initiation quickly degrades to an ADP-DnaA complex that is not apt for DNA replication. Binds acidic phospholipids. The polypeptide is Chromosomal replication initiator protein DnaA (Exiguobacterium sibiricum (strain DSM 17290 / CCUG 55495 / CIP 109462 / JCM 13490 / 255-15)).